Consider the following 68-residue polypeptide: Conotoxin Ar5.3 (68 aa).

The first 19 residues, methionine 1–serine 19, serve as a signal peptide directing secretion. Residues asparagine 20 to threonine 53 constitute a propeptide that is removed on maturation.

The protein belongs to the conotoxin T superfamily. Post-translationally, contains 2 disulfide bonds that can be either 'C1-C3, C2-C4' or 'C1-C4, C2-C3', since these disulfide connectivities have been observed for conotoxins with cysteine framework V (for examples, see AC P0DQQ7 and AC P81755). In terms of tissue distribution, expressed by the venom duct.

It localises to the secreted. The protein is Conotoxin Ar5.3 of Conus arenatus (Sand-dusted cone).